A 135-amino-acid polypeptide reads, in one-letter code: ATP synthase epsilon chain (135 aa).

This sequence belongs to the ATPase epsilon chain family. As to quaternary structure, F-type ATPases have 2 components, CF(1) - the catalytic core - and CF(0) - the membrane proton channel. CF(1) has five subunits: alpha(3), beta(3), gamma(1), delta(1), epsilon(1). CF(0) has three main subunits: a, b and c.

It is found in the cell inner membrane. Its function is as follows. Produces ATP from ADP in the presence of a proton gradient across the membrane. The polypeptide is ATP synthase epsilon chain (Bradyrhizobium sp. (strain ORS 278)).